The following is a 298-amino-acid chain: Ribosomal RNA small subunit methyltransferase A (298 aa).

S-adenosyl-L-methionine contacts are provided by N35, L37, G62, E83, D108, and N133.

This sequence belongs to the class I-like SAM-binding methyltransferase superfamily. rRNA adenine N(6)-methyltransferase family. RsmA subfamily.

It is found in the cytoplasm. The enzyme catalyses adenosine(1518)/adenosine(1519) in 16S rRNA + 4 S-adenosyl-L-methionine = N(6)-dimethyladenosine(1518)/N(6)-dimethyladenosine(1519) in 16S rRNA + 4 S-adenosyl-L-homocysteine + 4 H(+). Functionally, specifically dimethylates two adjacent adenosines (A1518 and A1519) in the loop of a conserved hairpin near the 3'-end of 16S rRNA in the 30S particle. May play a critical role in biogenesis of 30S subunits. The sequence is that of Ribosomal RNA small subunit methyltransferase A from Streptococcus pyogenes serotype M2 (strain MGAS10270).